A 634-amino-acid chain; its full sequence is Ras and EF-hand domain-containing protein homolog (634 aa).

EF-hand domains follow at residues 5 to 33 and 33 to 68; these read EVENLFSLCDSESKGYLTMEDLRKVCPQL and LDDNDLRFIFTELDQDGSGKIEKLEFLRGFQDTVQH. Residues aspartate 46, aspartate 48, serine 50, lysine 52, and glutamate 57 each contribute to the Ca(2+) site. Positions 169–310 form a coiled coil; that stretch reads LSEKKHENER…RCEFDQKQDE (142 aa). Residues 212 to 234 are disordered; sequence ARQEERDRLTKEKEEMRQRMSDE. GTP contacts are provided by residues 449-454, 552-555, and 585-586; these read AVGKSS, NKVD, and AL. A propeptide spans 632 to 634 (removed in mature form); sequence RGS.

This sequence belongs to the small GTPase superfamily. Rab family. In terms of assembly, homodimer.

The protein localises to the cytoplasm. It localises to the perinuclear region. Functionally, binds GTP and GDP. Plays a role in uterine seam cell development. The sequence is that of Ras and EF-hand domain-containing protein homolog from Caenorhabditis elegans.